The following is a 68-amino-acid chain: Conotoxin Cal12.1p3 (68 aa).

Positions 1–21 are excised as a propeptide; it reads DLITNSYTRGKPRHVTSWPKL.

In terms of processing, contains 4 disulfide bonds. As to expression, expressed by the venom duct.

The protein resides in the secreted. This Californiconus californicus (California cone) protein is Conotoxin Cal12.1p3.